The chain runs to 410 residues: Dual-specificity RNA methyltransferase RlmN (410 aa).

A disordered region spans residues 7–26; the sequence is VSSENLDGQQQSSSTPASPA. Over residues 15 to 26 the composition is skewed to low complexity; the sequence is QQQSSSTPASPA. The active-site Proton acceptor is E120. In terms of domain architecture, Radical SAM core spans 130–373; the sequence is TGSRKTLCIS…CTIRQTRGDD (244 aa). Residues C137 and C378 are joined by a disulfide bond. Positions 144, 148, and 151 each coordinate [4Fe-4S] cluster. Residues 200–201, S232, 254–256, and N335 each bind S-adenosyl-L-methionine; these read GE and SLH. The active-site S-methylcysteine intermediate is C378.

This sequence belongs to the radical SAM superfamily. RlmN family. The cofactor is [4Fe-4S] cluster.

The protein localises to the cytoplasm. It carries out the reaction adenosine(2503) in 23S rRNA + 2 reduced [2Fe-2S]-[ferredoxin] + 2 S-adenosyl-L-methionine = 2-methyladenosine(2503) in 23S rRNA + 5'-deoxyadenosine + L-methionine + 2 oxidized [2Fe-2S]-[ferredoxin] + S-adenosyl-L-homocysteine. The enzyme catalyses adenosine(37) in tRNA + 2 reduced [2Fe-2S]-[ferredoxin] + 2 S-adenosyl-L-methionine = 2-methyladenosine(37) in tRNA + 5'-deoxyadenosine + L-methionine + 2 oxidized [2Fe-2S]-[ferredoxin] + S-adenosyl-L-homocysteine. In terms of biological role, specifically methylates position 2 of adenine 2503 in 23S rRNA and position 2 of adenine 37 in tRNAs. m2A2503 modification seems to play a crucial role in the proofreading step occurring at the peptidyl transferase center and thus would serve to optimize ribosomal fidelity. The chain is Dual-specificity RNA methyltransferase RlmN from Acinetobacter baumannii (strain AB307-0294).